Consider the following 173-residue polypeptide: PRKR-interacting protein 1 homolog (173 aa).

Disordered regions lie at residues 1 to 59 (MAKE…PRSA) and 117 to 173 (MLEE…LEDQ). The span at 26–42 (ATDEQRLKLERLMRNPD) shows a compositional bias: basic and acidic residues. Residues 50 to 142 (RPKEWSPRSA…LKEKKKMCKK (93 aa)) form a required for RNA-binding region. The stretch at 99–150 (SEKQRLDEEYKKKLIQNKMLEEERTAKRRLKRQKLKEKKKMCKKGKKEEKKE) forms a coiled coil. A compositionally biased stretch (basic residues) spans 124-143 (AKRRLKRQKLKEKKKMCKKG). The tract at residues 125–137 (KRRLKRQKLKEKK) is required for nuclear localization. Positions 144-173 (KKEEKKEDKDGHTDPENSAESSDKSDLEDQ) are enriched in basic and acidic residues.

The protein belongs to the PRKRIP1 family. Component of the pre-catalytic and post-catalytic spliceosome complexes.

The protein resides in the nucleus. The protein localises to the nucleolus. Functionally, required for pre-mRNA splicing as component of the spliceosome. Binds double-stranded RNA. The sequence is that of PRKR-interacting protein 1 homolog (prkrip1) from Xenopus laevis (African clawed frog).